A 469-amino-acid chain; its full sequence is Serine hydroxymethyltransferase, cytosolic (469 aa).

Lys248 carries the N6-(pyridoxal phosphate)lysine modification.

The protein belongs to the SHMT family. In terms of assembly, homotetramer. Requires pyridoxal 5'-phosphate as cofactor.

The protein localises to the cytoplasm. The catalysed reaction is (6R)-5,10-methylene-5,6,7,8-tetrahydrofolate + glycine + H2O = (6S)-5,6,7,8-tetrahydrofolate + L-serine. It functions in the pathway one-carbon metabolism; tetrahydrofolate interconversion. In terms of biological role, interconversion of serine and glycine. This chain is Serine hydroxymethyltransferase, cytosolic (SHM2), found in Eremothecium gossypii (strain ATCC 10895 / CBS 109.51 / FGSC 9923 / NRRL Y-1056) (Yeast).